Here is a 259-residue protein sequence, read N- to C-terminus: UPF0246 protein VFMJ11_2214 (259 aa).

It belongs to the UPF0246 family.

This chain is UPF0246 protein VFMJ11_2214, found in Aliivibrio fischeri (strain MJ11) (Vibrio fischeri).